The following is a 255-amino-acid chain: Ribonuclease HII (255 aa).

The RNase H type-2 domain maps to 70 to 255; sequence ELIAGVDEVG…FEPIKSIIKK (186 aa). Residues aspartate 76, glutamate 77, and aspartate 168 each contribute to the a divalent metal cation site.

The protein belongs to the RNase HII family. Mn(2+) is required as a cofactor. It depends on Mg(2+) as a cofactor.

The protein resides in the cytoplasm. The catalysed reaction is Endonucleolytic cleavage to 5'-phosphomonoester.. In terms of biological role, endonuclease that specifically degrades the RNA of RNA-DNA hybrids. In Streptococcus thermophilus (strain ATCC BAA-491 / LMD-9), this protein is Ribonuclease HII.